We begin with the raw amino-acid sequence, 225 residues long: DNA repair protein RecO (225 aa).

This sequence belongs to the RecO family.

Its function is as follows. Involved in DNA repair and RecF pathway recombination. The protein is DNA repair protein RecO of Clostridium perfringens (strain ATCC 13124 / DSM 756 / JCM 1290 / NCIMB 6125 / NCTC 8237 / Type A).